The primary structure comprises 971 residues: Valine--tRNA ligase (971 aa).

Positions 55–65 (PNVTGSLHMGH) match the 'HIGH' region motif. Residues 572 to 576 (KMSKS) carry the 'KMSKS' region motif. Residue Lys-575 coordinates ATP. The stretch at 906-933 (KAELGRLQKDLDKVQKQHDQIASKLANE) forms a coiled coil.

The protein belongs to the class-I aminoacyl-tRNA synthetase family. ValS type 1 subfamily. In terms of assembly, monomer.

It is found in the cytoplasm. The catalysed reaction is tRNA(Val) + L-valine + ATP = L-valyl-tRNA(Val) + AMP + diphosphate. Catalyzes the attachment of valine to tRNA(Val). As ValRS can inadvertently accommodate and process structurally similar amino acids such as threonine, to avoid such errors, it has a 'posttransfer' editing activity that hydrolyzes mischarged Thr-tRNA(Val) in a tRNA-dependent manner. In Acinetobacter baylyi (strain ATCC 33305 / BD413 / ADP1), this protein is Valine--tRNA ligase.